Here is a 180-residue protein sequence, read N- to C-terminus: Guanosine-3',5'-bis(diphosphate) 3'-pyrophosphohydrolase MESH1 (180 aa).

The 96-residue stretch at 33–128 (YINHPIGVAR…VKLADKLYNL (96 aa)) folds into the HD domain. His36, His62, and Asp63 together coordinate Mn(2+). Catalysis depends on nucleophile residues Glu66 and Asp67. Residue Asp123 coordinates Mn(2+).

Belongs to the MESH1 family. Mn(2+) is required as a cofactor.

It carries out the reaction guanosine 3',5'-bis(diphosphate) + H2O = GDP + diphosphate + H(+). Functionally, ppGpp hydrolyzing enzyme involved in starvation response. This Danio rerio (Zebrafish) protein is Guanosine-3',5'-bis(diphosphate) 3'-pyrophosphohydrolase MESH1 (hddc3).